The chain runs to 414 residues: Serine/arginine (SR)-type shuttling mRNA binding protein NPL3 (414 aa).

Over residues 1–11 the composition is skewed to basic and acidic residues; sequence MSEAQETHVEQ. Positions 1–119 are disordered; it reads MSEAQETHVE…GRPPMHHRQE (119 aa). The residue at position 15 (Ser-15) is a Phosphoserine. The segment covering 33–51 has biased composition (low complexity); sequence DAPQEPQVPQESAPQESAP. A compositionally biased stretch (pro residues) spans 52-68; the sequence is QEPPAPQEQNDVPPPSN. Basic and acidic residues predominate over residues 75–92; that stretch reads EESHSVQDYQEAHQHHQP. Ser-79 carries the phosphoserine modification. Residues 93-105 are compositionally biased toward pro residues; sequence PEPQPYYPPPPPG. RRM domains follow at residues 125–195 and 200–275; these read TRLF…YSKL and YRIT…RDDN. A phosphoserine mark is found at Ser-182, Ser-212, and Ser-224. Positions 269–299 are disordered; sequence TVERDDNPPPIRRSNRGGFRGRGGFRGGFRG. Gly residues predominate over residues 286 to 299; sequence GFRGRGGFRGGFRG. Arg-288, Arg-290, Arg-294, and Arg-298 each carry dimethylated arginine. Residue Arg-302 is modified to Omega-N-methylarginine. Residues Arg-307 and Arg-314 each carry the dimethylated arginine; alternate modification. 2 positions are modified to omega-N-methylarginine; alternate: Arg-307 and Arg-314. Arg-321, Arg-329, Arg-337, and Arg-344 each carry omega-N-methylarginine. Positions 343–414 are disordered; it reads SRGGYDSPRG…DAPRERSPTR (72 aa). Residues 346–360 are compositionally biased toward low complexity; it reads GYDSPRGGYDSPRGG. Dimethylated arginine; alternate is present on Arg-351. Arg-351 is subject to Omega-N-methylarginine; alternate. Ser-356 carries the post-translational modification Phosphoserine. A dimethylated arginine; alternate mark is found at Arg-358, Arg-363, Arg-377, and Arg-384. Omega-N-methylarginine; alternate is present on residues Arg-358, Arg-363, Arg-377, and Arg-384. Residues 379 to 389 show a composition bias toward gly residues; sequence SYGGSRGGYDG. Arg-391 is modified (omega-N-methylarginine). Over residues 399–414 the composition is skewed to basic and acidic residues; it reads DAYRTRDAPRERSPTR.

This sequence belongs to the RRM GAR family. Interacts with RRP6. In terms of processing, methylated by HMT1. The methylation is required for nuclear export.

It is found in the cytoplasm. The protein resides in the nucleus. Its subcellular location is the stress granule. Functionally, involved in mRNA processing and export. Required for efficient splicing of a large set of pre-mRNAs by efficient co-transcriptional recruitment of the splicing machinery. Remains associated with the mRNP during early steps of translation elongation. In Saccharomyces cerevisiae (strain ATCC 204508 / S288c) (Baker's yeast), this protein is Serine/arginine (SR)-type shuttling mRNA binding protein NPL3.